We begin with the raw amino-acid sequence, 257 residues long: Zinc finger protein 8 (257 aa).

Disordered regions lie at residues 48–92 (GDNS…NNNN), 108–128 (QALG…KRGS), and 214–238 (GVYS…PNNW). A compositionally biased stretch (polar residues) spans 50–65 (NSDNLSAEPSDHQTTT). Over residues 66 to 92 (KNDESSENIKDKDKEKDKDKDKDNNNN) the composition is skewed to basic and acidic residues. A C2H2-type zinc finger spans residues 95 to 117 (FECHYCFRNFPTSQALGGHQNAH). Residues 115-126 (NAHKRERQHAKR) show a composition bias toward basic residues.

Expressed in developing cauline leaves.

The protein resides in the nucleus. Functionally, probable transcription factor required for the initiation of inflorescence trichomes in response to gibberellin and cytokinin. Is not involved in the regulation of trichome branching. Is functionally equivalent to GIS2. Acts as a negative regulator of abscisic acid (ABA) signaling during germination and early seedling development. The sequence is that of Zinc finger protein 8 from Arabidopsis thaliana (Mouse-ear cress).